We begin with the raw amino-acid sequence, 1085 residues long: SLIT-ROBO Rho GTPase-activating protein 1 (1085 aa).

One can recognise an F-BAR domain in the interval 19–314; sequence SQVKEIRAQL…AVDNLEPRSD (296 aa). The stretch at 351–390 forms a coiled coil; it reads VQAELMLRYQQLQSRLATLKIENEEVKKTTEATLQTIQDM. Position 416 is a phosphoserine (Ser-416). The segment at 475–496 is disordered; sequence YMTTRPPNVPPKPQKHRKSRPR. In terms of domain architecture, Rho-GAP spans 506–694; sequence GDLETFVKDS…TIIIHHETIF (189 aa). An SH3 domain is found at 743–802; the sequence is CEPIEAIAKFDYVGRSARELSFKKGASLLLYHRASEDWWEGRHNGIDGLVPHQYIVVQDM. A compositionally biased stretch (polar residues) spans 808-822; it reads DTLSQKADSEASSGP. A disordered region spans residues 808-954; that stretch reads DTLSQKADSE…TGFNDHKPLD (147 aa). Ser-835 and Ser-917 each carry phosphoserine. Basic and acidic residues predominate over residues 922 to 931; it reads SRHDSLKKID. Ser-932 carries the post-translational modification Phosphoserine. Residues 937 to 946 are compositionally biased toward polar residues; that stretch reads RSTSSGQYTG. The stretch at 956-985 forms a coiled coil; that stretch reads ETIAQDIEETMNTALNELRELERQSTAKHA. A compositionally biased stretch (polar residues) spans 997-1011; sequence KNSPTPATSTESLSP. Disordered regions lie at residues 997–1038 and 1051–1085; these read KNSP…MSTF and KPPALRPKPAVLPKTNPTIGPAPPPQGPTDKSCTM. A Phosphoserine modification is found at Ser-999. The residue at position 1001 (Thr-1001) is a Phosphothreonine. Positions 1027–1037 are enriched in low complexity; it reads STSSSSDTMST. Position 1032 is a phosphoserine (Ser-1032).

In terms of assembly, homodimer. Forms a heterooligomer with SRGAP2 and SRGAP3 through its F-BAR domain. Interacts with ROBO1, CDC42 and RHOA. Interacts with FASLG. As to expression, expressed in brain, lung, kidney, and testis.

Functionally, GTPase-activating protein for RhoA and Cdc42 small GTPases. Together with CDC42 seems to be involved in the pathway mediating the repulsive signaling of Robo and Slit proteins in neuronal migration. SLIT2, probably through interaction with ROBO1, increases the interaction of SRGAP1 with ROBO1 and inactivates CDC42. This is SLIT-ROBO Rho GTPase-activating protein 1 (SRGAP1) from Homo sapiens (Human).